The sequence spans 152 residues: Transcriptional repressor NrdR (152 aa).

Positions 1-21 are disordered; sequence MRCPFCGNGDTQVKDSRPTED. A zinc finger spans residues 3–34; the sequence is CPFCGNGDTQVKDSRPTEDSAAIRRRRFCPAC. Basic and acidic residues predominate over residues 12–21; it reads QVKDSRPTED. The region spanning 49 to 139 is the ATP-cone domain; that stretch reads LVIVKKDGQR…VYRNFREAKD (91 aa).

Belongs to the NrdR family. Zn(2+) is required as a cofactor.

In terms of biological role, negatively regulates transcription of bacterial ribonucleotide reductase nrd genes and operons by binding to NrdR-boxes. The polypeptide is Transcriptional repressor NrdR (Rhodospirillum rubrum (strain ATCC 11170 / ATH 1.1.1 / DSM 467 / LMG 4362 / NCIMB 8255 / S1)).